The chain runs to 322 residues: tRNA dimethylallyltransferase (322 aa).

21–28 contributes to the ATP binding site; that stretch reads GQTAVGKT. 23-28 contributes to the substrate binding site; sequence TAVGKT. The segment at 46-49 is interaction with substrate tRNA; that stretch reads DSGC.

It belongs to the IPP transferase family. In terms of assembly, monomer. The cofactor is Mg(2+).

The enzyme catalyses adenosine(37) in tRNA + dimethylallyl diphosphate = N(6)-dimethylallyladenosine(37) in tRNA + diphosphate. Functionally, catalyzes the transfer of a dimethylallyl group onto the adenine at position 37 in tRNAs that read codons beginning with uridine, leading to the formation of N6-(dimethylallyl)adenosine (i(6)A). This is tRNA dimethylallyltransferase from Wigglesworthia glossinidia brevipalpis.